The sequence spans 363 residues: 3-isopropylmalate dehydrogenase (363 aa).

NAD(+) is bound at residue 78-91 (GPKWENLPPESQPE). Residues Arg-99, Arg-109, Arg-138, and Asp-227 each coordinate substrate. The Mg(2+) site is built by Asp-227, Asp-251, and Asp-255. 285 to 297 (GSAPDIAGKNIAN) serves as a coordination point for NAD(+).

Belongs to the isocitrate and isopropylmalate dehydrogenases family. LeuB type 1 subfamily. Homodimer. Mg(2+) is required as a cofactor. Requires Mn(2+) as cofactor.

It localises to the cytoplasm. The enzyme catalyses (2R,3S)-3-isopropylmalate + NAD(+) = 4-methyl-2-oxopentanoate + CO2 + NADH. The protein operates within amino-acid biosynthesis; L-leucine biosynthesis; L-leucine from 3-methyl-2-oxobutanoate: step 3/4. Its function is as follows. Catalyzes the oxidation of 3-carboxy-2-hydroxy-4-methylpentanoate (3-isopropylmalate) to 3-carboxy-4-methyl-2-oxopentanoate. The product decarboxylates to 4-methyl-2 oxopentanoate. The polypeptide is 3-isopropylmalate dehydrogenase (Salmonella typhi).